A 357-amino-acid chain; its full sequence is F-box only protein 25 (357 aa).

Residues 1–83 (MPFLGQDWRS…DTAAHSFYRE (83 aa)) are interaction with beta-actin. In terms of domain architecture, F-box spans 225–273 (LTLSDLPLHMLNNILYRFSDGWDIVTLGQVTPTLYMLSEDRRLWKRLCQ).

Part of a SCF (SKP1-cullin-F-box) protein ligase complex consisting of FBXO25, SKP1, CUL1 and RBX1. Interacts directly with SKP1 and CUL1. Interacts (via C-terminus) with beta-actin (via N-terminus). In terms of tissue distribution, expressed in all tissues tested, except striated muscle (at protein level). Expressed predominantly in the cerebral cortex, the hippocampus and the Purkinje cell layer of the brain. Intestine and kidney show also significant levels.

The protein localises to the nucleus. It participates in protein modification; protein ubiquitination. Its function is as follows. Substrate-recognition component of the SCF (SKP1-CUL1-F-box protein)-type E3 ubiquitin ligase complex. May play a role in accumulation of expanded polyglutamine (polyQ) protein huntingtin (HTT). In Mus musculus (Mouse), this protein is F-box only protein 25 (Fbxo25).